The following is a 520-amino-acid chain: Glutamyl-tRNA(Gln) amidotransferase subunit A (520 aa).

Active-site charge relay system residues include Lys80 and Ser155. Ser179 serves as the catalytic Acyl-ester intermediate.

It belongs to the amidase family. GatA subfamily. In terms of assembly, heterotrimer of A, B and C subunits.

It catalyses the reaction L-glutamyl-tRNA(Gln) + L-glutamine + ATP + H2O = L-glutaminyl-tRNA(Gln) + L-glutamate + ADP + phosphate + H(+). Functionally, allows the formation of correctly charged Gln-tRNA(Gln) through the transamidation of misacylated Glu-tRNA(Gln) in organisms which lack glutaminyl-tRNA synthetase. The reaction takes place in the presence of glutamine and ATP through an activated gamma-phospho-Glu-tRNA(Gln). In Renibacterium salmoninarum (strain ATCC 33209 / DSM 20767 / JCM 11484 / NBRC 15589 / NCIMB 2235), this protein is Glutamyl-tRNA(Gln) amidotransferase subunit A.